A 164-amino-acid polypeptide reads, in one-letter code: Cyclic pyranopterin monophosphate synthase (164 aa).

Substrate contacts are provided by residues 77–79 (LCH) and 115–116 (ME). Asp130 is an active-site residue.

Belongs to the MoaC family. As to quaternary structure, homohexamer; trimer of dimers.

It carries out the reaction (8S)-3',8-cyclo-7,8-dihydroguanosine 5'-triphosphate = cyclic pyranopterin phosphate + diphosphate. It participates in cofactor biosynthesis; molybdopterin biosynthesis. Functionally, catalyzes the conversion of (8S)-3',8-cyclo-7,8-dihydroguanosine 5'-triphosphate to cyclic pyranopterin monophosphate (cPMP). The polypeptide is Cyclic pyranopterin monophosphate synthase (Sinorhizobium medicae (strain WSM419) (Ensifer medicae)).